Here is a 180-residue protein sequence, read N- to C-terminus: Hypoxanthine-guanine phosphoribosyltransferase (180 aa).

Lys43 and Gly44 together coordinate diphosphate. Mg(2+) contacts are provided by Glu99 and Asp100. Residue Asp103 is the Proton acceptor of the active site. GMP-binding positions include Lys131, 152 to 153 (FV), and Asp159. Residue Arg165 participates in diphosphate binding.

It belongs to the purine/pyrimidine phosphoribosyltransferase family. Requires Mg(2+) as cofactor.

It is found in the cytoplasm. The catalysed reaction is IMP + diphosphate = hypoxanthine + 5-phospho-alpha-D-ribose 1-diphosphate. The enzyme catalyses GMP + diphosphate = guanine + 5-phospho-alpha-D-ribose 1-diphosphate. It participates in purine metabolism; IMP biosynthesis via salvage pathway; IMP from hypoxanthine: step 1/1. It functions in the pathway purine metabolism; GMP biosynthesis via salvage pathway; GMP from guanine: step 1/1. Functionally, purine salvage pathway enzyme that catalyzes the transfer of the ribosyl-5-phosphate group from 5-phospho-alpha-D-ribose 1-diphosphate (PRPP) to the N9 position of the 6-oxopurines hypoxanthine and guanine to form the corresponding ribonucleotides IMP (inosine 5'-monophosphate) and GMP (guanosine 5'-monophosphate), with the release of PPi. The protein is Hypoxanthine-guanine phosphoribosyltransferase (hpt) of Streptococcus pneumoniae serotype 4 (strain ATCC BAA-334 / TIGR4).